We begin with the raw amino-acid sequence, 80 residues long: Turripeptide VI/VII-01 (80 aa).

The first 22 residues, 1 to 22, serve as a signal peptide directing secretion; sequence MRLQLILTITLLLTSFMGYRDA. The propeptide occupies 23–36; sequence AVIQGKTERSAMKM. 3 disulfides stabilise this stretch: cysteine 48–cysteine 61, cysteine 50–cysteine 65, and cysteine 60–cysteine 70. Residues 77 to 80 constitute a propeptide that is removed on maturation; the sequence is SSAI.

As to expression, expressed by the venom duct.

It is found in the secreted. This chain is Turripeptide VI/VII-01, found in Gemmula speciosa (Splendid gem-turris).